A 352-amino-acid polypeptide reads, in one-letter code: Protein YpbB (352 aa).

In terms of assembly, interacts with RecS and SSB (ssbA); the 6 C-terminal residues of SSB are required for interaction with YpbB.

The protein resides in the cytoplasm. The protein localises to the nucleoid. This chain is Protein YpbB (ypbB), found in Bacillus subtilis (strain 168).